A 114-amino-acid chain; its full sequence is uncharacterized protein (114 aa).

The protein to E.coli YggL.

This is an uncharacterized protein from Haemophilus influenzae (strain ATCC 51907 / DSM 11121 / KW20 / Rd).